A 60-amino-acid polypeptide reads, in one-letter code: MTTQQTIKVQLIRSPIGCQESHRATVRGLGLRKIRSTSELVDTPEVRGMINKISYLIKVL.

It belongs to the universal ribosomal protein uL30 family. In terms of assembly, part of the 50S ribosomal subunit.

This chain is Large ribosomal subunit protein uL30, found in Albidiferax ferrireducens (strain ATCC BAA-621 / DSM 15236 / T118) (Rhodoferax ferrireducens).